We begin with the raw amino-acid sequence, 299 residues long: Protein N-terminal and lysine N-methyltransferase EFM7 (299 aa).

Residues tryptophan 74, 100–102 (GAG), aspartate 122, tryptophan 155, and serine 178 contribute to the S-adenosyl-L-methionine site.

This sequence belongs to the class I-like SAM-binding methyltransferase superfamily. EFM7 family.

It localises to the cytoplasm. Its function is as follows. S-adenosyl-L-methionine-dependent protein methyltransferase that trimethylates the N-terminal glycine 'Gly-2' of elongation factor 1-alpha, before also catalyzing the mono- and dimethylation of 'Lys-3'. This is Protein N-terminal and lysine N-methyltransferase EFM7 from Cryptococcus neoformans var. neoformans serotype D (strain B-3501A) (Filobasidiella neoformans).